The chain runs to 124 residues: NADH-quinone oxidoreductase subunit K (124 aa).

A run of 3 helical transmembrane segments spans residues 28 to 48 (MEHGLILAAIIFAIGLCGVMV), 52 to 72 (FLFMLMSLEIMMSAAGLAFIV), and 84 to 104 (IMFIFILTLAAAEASLGLAIL).

Belongs to the complex I subunit 4L family. NDH-1 is composed of 14 different subunits. Subunits NuoA, H, J, K, L, M, N constitute the membrane sector of the complex.

It is found in the cell inner membrane. It carries out the reaction a quinone + NADH + 5 H(+)(in) = a quinol + NAD(+) + 4 H(+)(out). Its function is as follows. NDH-1 shuttles electrons from NADH, via FMN and iron-sulfur (Fe-S) centers, to quinones in the respiratory chain. The immediate electron acceptor for the enzyme in this species is believed to be ubiquinone. Couples the redox reaction to proton translocation (for every two electrons transferred, four hydrogen ions are translocated across the cytoplasmic membrane), and thus conserves the redox energy in a proton gradient. The sequence is that of NADH-quinone oxidoreductase subunit K from Psychrobacter sp. (strain PRwf-1).